The following is a 164-amino-acid chain: Cytochrome c-type biogenesis protein CcmE (164 aa).

The Cytoplasmic portion of the chain corresponds to 1–8; it reads MNPRRKQR. A helical; Signal-anchor for type II membrane protein transmembrane segment spans residues 9 to 29; it reads LAVVGIIGFLIVSAVGLMLYA. The Periplasmic segment spans residues 30 to 164; sequence LNDSIDLFYT…YESSNGAGSK (135 aa). Heme contacts are provided by H128 and Y132. Residues 142 to 164 form a disordered region; that stretch reads KGIKHVKPENMPTYESSNGAGSK. A compositionally biased stretch (polar residues) spans 154 to 164; it reads TYESSNGAGSK.

Belongs to the CcmE/CycJ family.

Its subcellular location is the cell inner membrane. Its function is as follows. Heme chaperone required for the biogenesis of c-type cytochromes. Transiently binds heme delivered by CcmC and transfers the heme to apo-cytochromes in a process facilitated by CcmF and CcmH. The protein is Cytochrome c-type biogenesis protein CcmE of Alteromonas mediterranea (strain DSM 17117 / CIP 110805 / LMG 28347 / Deep ecotype).